A 188-amino-acid chain; its full sequence is Large ribosomal subunit protein eL18 (188 aa).

The tract at residues G153–N188 is disordered. Positions S161 to G171 are enriched in basic residues.

This sequence belongs to the eukaryotic ribosomal protein eL18 family. Component of the large ribosomal subunit.

The protein resides in the cytoplasm. It localises to the cytosol. The protein localises to the rough endoplasmic reticulum. In terms of biological role, component of the large ribosomal subunit. The ribosome is a large ribonucleoprotein complex responsible for the synthesis of proteins in the cell. The protein is Large ribosomal subunit protein eL18 (rpl18) of Oreochromis mossambicus (Mozambique tilapia).